Here is a 424-residue protein sequence, read N- to C-terminus: MCTTISFAEPEIVLGHGRRVLFVNPDDLQIFKEIELPPDLGLKGHTSQSQESCTAAAAASTATAASGQAPGGKEQQLANQPEEGGTSASASGLGCATSTSVQNVAYSPDGQLLAVTTSGKQKALLLYRSRPENARLLSARPLARASSALRFCSDSSSILVTDKTGDCYQYDCVEVEAPPRLLLGHLSVVYDILWSEDQQHIITCDRDDKIRVTNYPATFDIHSYCLGHREFVSGLALLTEQHIASASGDKTLRVWNYIQGKELLQHELPAPAVRLLVRQLEPEKVFQAAVLFYEHVDALGLYRLERSSDDTWSVTATQLVCAEAGSWSISNFTLTSDRIYITGAENERLSLRVYDIATGQPASSGVPEGWLKMVLDGLGANEEGAPPFIPEDLSVWFKKRFDNVSDYLERKKRRIEEQQQQKCG.

Residues 42–92 form a disordered region; that stretch reads LKGHTSQSQESCTAAAAASTATAASGQAPGGKEQQLANQPEEGGTSASASG. A compositionally biased stretch (low complexity) spans 46 to 68; the sequence is TSQSQESCTAAAAASTATAASGQ. WD repeat units lie at residues 96-137, 184-223, 227-265, and 324-364; these read ATST…ARLL, GHLSVVYDILWSEDQQHIITCDRDDKIRVTNYPATFDIHS, GHREFVSGLALLTEQHIASASGDKTLRVWNYIQGKELLQ, and AGSW…PASS.

The protein belongs to the WD repeat TRM82 family. As to quaternary structure, forms a heterodimer with the catalytic subunit Mettl1. Interacts with mei-P26 and weakly interacts with bgcn; required for the function or formation of the mei-P26-bgcn-bam-sxl complex. Interacts with nanos; may be involved in mei-P26-dependent derepression of the BMP signaling pathway. Interacts with Myc; the interaction may be mediated by mei-P26 and may be involved in the regulation of ribosome biogenesis. As to expression, in testis, it is present at high level in hub cells, a niche for germline stem cells of testis. Ubiquitously expressed in all testicular cells throughout spermatogenesis. Ubiquitously expressed in all germline and somatic cells of the ovary.

The protein resides in the nucleus. Its subcellular location is the cytoplasm. It functions in the pathway tRNA modification; N(7)-methylguanine-tRNA biosynthesis. Functionally, required for the Mettl1-dependent formation of N(7)-methylguanine at position 46 (m7G46) in tRNA. In the Mettl1-wuho methyltransferase complex, it is required to stabilize and induce conformational changes of the catalytic subunit. Required for binding of nanos mRNA and repression of translation by the mei-P26-bgcn-bam-sxl complex. May cooperate with mei-P26 and nanos to derepress the BMP signaling pathway. May cooperate with mei-P26 to suppress expression of a subset of microRNAs. May cooperate with mei-P26 to regulate bam expression levels in germline cells during gametogenesis. Required to promote mitosis to meiosis transition during gametogenesis. May regulate germline cell division in part by regulating ribosome biogenesis. The protein is tRNA (guanine-N(7)-)-methyltransferase non-catalytic subunit wuho of Drosophila melanogaster (Fruit fly).